Consider the following 537-residue polypeptide: MAKDIKFSEDARRSLLNGVNKLANTVKTTLGPKGRNVVLEQSYGAPTITNDGVTIAKAIELEDHYENIGAKLVAEAASKTNDIAGDGTTTATVLTQAIVQEGMKNVVAGANPVGIRRGIEKATKAAVDQLHKNSHKVSSRDQIAQVASISSASKEIGDLIAEAMEKVGKDGVITIEDSRGIETELSVVEGMQFDRGYLSQYMVTDNDKMEADLENPYILITDKKISNIQDILPMLQEIVQQGRSLLIIADDVTGEALPTLVLNKIRGTFNVVAVKAPGFGDRRKEQLADIAALTGGTVISEDLGLELKDTQLSQLGQARRVTITKDSTTIVDGSGAKEAIQERVDTIRKQIEDTSSDFDKKKLQERLAKLTGGVAVIHVGAATETELKERRYRVEDALNATRAAVDEGYVAGGGTALVNVEEAVKATKGDTDDEQTGINIVARALTAPVRQIAENAGQEGSVVVDHLRKVDPEVGYNAAEDKYVNMIDEGIIDPTQVTRSALQNAASIAGLLLTTEAVVAEIPEDKPEAAPAQPGMM.

ATP is bound by residues 29 to 32 (TLGP), 86 to 90 (DGTTT), Gly413, 477 to 479 (NAA), and Asp493.

The protein belongs to the chaperonin (HSP60) family. As to quaternary structure, forms a cylinder of 14 subunits composed of two heptameric rings stacked back-to-back. Interacts with the co-chaperonin GroES.

Its subcellular location is the cytoplasm. It catalyses the reaction ATP + H2O + a folded polypeptide = ADP + phosphate + an unfolded polypeptide.. Its function is as follows. Together with its co-chaperonin GroES, plays an essential role in assisting protein folding. The GroEL-GroES system forms a nano-cage that allows encapsulation of the non-native substrate proteins and provides a physical environment optimized to promote and accelerate protein folding. This Lactobacillus delbrueckii subsp. bulgaricus (strain ATCC 11842 / DSM 20081 / BCRC 10696 / JCM 1002 / NBRC 13953 / NCIMB 11778 / NCTC 12712 / WDCM 00102 / Lb 14) protein is Chaperonin GroEL.